Reading from the N-terminus, the 371-residue chain is Chorismate synthase (371 aa).

Arg48 and Arg54 together coordinate NADP(+). Residues 131 to 133, 245 to 246, Gly290, 305 to 309, and Arg331 each bind FMN; these read RSS, NA, and KPTSS.

The protein belongs to the chorismate synthase family. As to quaternary structure, homotetramer. FMNH2 is required as a cofactor.

The catalysed reaction is 5-O-(1-carboxyvinyl)-3-phosphoshikimate = chorismate + phosphate. Its pathway is metabolic intermediate biosynthesis; chorismate biosynthesis; chorismate from D-erythrose 4-phosphate and phosphoenolpyruvate: step 7/7. Its function is as follows. Catalyzes the anti-1,4-elimination of the C-3 phosphate and the C-6 proR hydrogen from 5-enolpyruvylshikimate-3-phosphate (EPSP) to yield chorismate, which is the branch point compound that serves as the starting substrate for the three terminal pathways of aromatic amino acid biosynthesis. This reaction introduces a second double bond into the aromatic ring system. This Mesorhizobium japonicum (strain LMG 29417 / CECT 9101 / MAFF 303099) (Mesorhizobium loti (strain MAFF 303099)) protein is Chorismate synthase.